The following is a 371-amino-acid chain: Conglutinin (371 aa).

The N-terminal stretch at 1 to 20 (MLLLPLSVLLLLTQPWRSLG) is a signal peptide. In terms of domain architecture, Collagen-like spans 46–216 (GLPGHDGQDG…TGAKGESGLA (171 aa)). The tract at residues 47-215 (LPGHDGQDGR…ETGAKGESGL (169 aa)) is disordered. The segment covering 51–65 (DGQDGRECPHGEKGD) has biased composition (basic and acidic residues). Lys63 bears the 5-hydroxylysine mark. Low complexity predominate over residues 71–83 (PAGRAGRPGWVGP). Pro78 carries the 4-hydroxyproline modification. At Lys87 the chain carries 5-hydroxylysine. A 4-hydroxyproline modification is found at Pro96. The residue at position 99 (Lys99) is a 5-hydroxylysine. 4 positions are modified to 4-hydroxyproline: Pro108, Pro111, Pro129, and Pro132. 2 positions are modified to 5-hydroxylysine: Lys135 and Lys141. Positions 139–148 (GPKGGVGAPG) are enriched in gly residues. Residues Pro147 and Pro153 each carry the 4-hydroxyproline modification. 5-hydroxylysine is present on residues Lys159 and Lys162. 4-hydroxyproline is present on residues Pro171 and Pro195. Lys198 carries the post-translational modification 5-hydroxylysine. The short motif at 201–203 (RGD) is the Cell attachment site element. A C-type lectin domain is found at 273–371 (QLCREAKGQL…SKQLLVICEF (99 aa)). 2 cysteine pairs are disulfide-bonded: Cys275/Cys369 and Cys347/Cys361. Asn337 carries N-linked (GlcNAc...) asparagine glycosylation.

It belongs to the SFTPD family. Oligomeric complex of 4 set of homotrimers. The hydroxylysines may be O-glycosylated.

Its function is as follows. Calcium-dependent lectin-like protein which binds to a yeast cell wall extract and immune complexes through the complement component (C3bi). It is capable of binding non-reducing terminal N-acetylglucosamine, mannose, and fucose residues. In Bos taurus (Bovine), this protein is Conglutinin (CGN1).